A 511-amino-acid chain; its full sequence is MAFSKKNNIFGSNNIFTILKTLKDESLLKENDSKNLEQKNNSFNVPKILNNVNISTNCEVNTSKILNYRGLTKGLKESNSTITNNGIFVDNKILISFDDIREMYSYYADYRIKLQYILLNRQKSILETIHSLDNKKGELFKMRFNYNEIVSNEFKIRKCIKLCMVYQNLIELYKLVLRLFDLLKIMTIDNGTNVIVMLNVSDLSIEKKKQFFESKQKIERYLVQTKNILNLLDGSFEKYKSTISQFLDYIDDTIKQFSTLSREETKILSSKTSEMFRQVDDYLRQIINDFDPHTNCEYYVSIDLENSNPINPVGIRHCTYIKCDSELNLAIKNKKIDKNILENISQEELEKLFTHVKRTNDDDFIRIYHGEPQMCPIININFFVENKIPLSGVSVGITNLPKNATILTSIINNHRQYNKYDDEIIPVPLYSNHMFETYVNNVLSDMTDDEYNNLNHFLKIKYNKEDTNNTKFIVDYLFEELADSSQESNLIKPEMFESFARLVQSNSYYGR.

This is an uncharacterized protein from Acanthamoeba polyphaga (Amoeba).